A 190-amino-acid chain; its full sequence is Potassium-transporting ATPase KdpC subunit (190 aa).

The chain crosses the membrane as a helical span at residues 10–30; that stretch reads TFIFLLLITGGVYPLLTTVLG.

This sequence belongs to the KdpC family. In terms of assembly, the system is composed of three essential subunits: KdpA, KdpB and KdpC.

The protein resides in the cell inner membrane. Part of the high-affinity ATP-driven potassium transport (or Kdp) system, which catalyzes the hydrolysis of ATP coupled with the electrogenic transport of potassium into the cytoplasm. This subunit acts as a catalytic chaperone that increases the ATP-binding affinity of the ATP-hydrolyzing subunit KdpB by the formation of a transient KdpB/KdpC/ATP ternary complex. The sequence is that of Potassium-transporting ATPase KdpC subunit from Escherichia coli (strain SE11).